The primary structure comprises 692 residues: DNA ligase (692 aa).

Residues 35-39 (DLVYD), 88-89 (SL), and Glu117 contribute to the NAD(+) site. The active-site N6-AMP-lysine intermediate is Lys119. Residues Arg140, Glu176, Lys301, and Lys325 each coordinate NAD(+). Zn(2+) contacts are provided by Cys416, Cys419, Cys434, and Cys439. The BRCT domain occupies 611–692 (LTNQSNSWAS…FDLIKNSKKT (82 aa)).

The protein belongs to the NAD-dependent DNA ligase family. LigA subfamily. Mg(2+) serves as cofactor. The cofactor is Mn(2+).

It catalyses the reaction NAD(+) + (deoxyribonucleotide)n-3'-hydroxyl + 5'-phospho-(deoxyribonucleotide)m = (deoxyribonucleotide)n+m + AMP + beta-nicotinamide D-nucleotide.. In terms of biological role, DNA ligase that catalyzes the formation of phosphodiester linkages between 5'-phosphoryl and 3'-hydroxyl groups in double-stranded DNA using NAD as a coenzyme and as the energy source for the reaction. It is essential for DNA replication and repair of damaged DNA. This is DNA ligase from Mesomycoplasma hyopneumoniae (strain 232) (Mycoplasma hyopneumoniae).